Consider the following 349-residue polypeptide: Protein RecA (349 aa).

64–71 contacts ATP; sequence GPESSGKT. The tract at residues 328–349 is disordered; the sequence is NGEIEVEAPSEEEFEDLPLDLK. Acidic residues predominate over residues 331 to 349; that stretch reads IEVEAPSEEEFEDLPLDLK.

Belongs to the RecA family.

It is found in the cytoplasm. In terms of biological role, can catalyze the hydrolysis of ATP in the presence of single-stranded DNA, the ATP-dependent uptake of single-stranded DNA by duplex DNA, and the ATP-dependent hybridization of homologous single-stranded DNAs. It interacts with LexA causing its activation and leading to its autocatalytic cleavage. The sequence is that of Protein RecA from Halalkalibacterium halodurans (strain ATCC BAA-125 / DSM 18197 / FERM 7344 / JCM 9153 / C-125) (Bacillus halodurans).